The sequence spans 891 residues: Fanconi-associated nuclease 1 homolog (891 aa).

Residues glutamate 712, aspartate 833, glutamate 852, and valine 853 each coordinate Mn(2+). A VRR-NUC domain is found at 770–884 (GMAEEILIIS…GFNVEICKVR (115 aa)).

Belongs to the FAN1 family. It depends on Mn(2+) as a cofactor. Requires Mg(2+) as cofactor.

The protein localises to the nucleus. The enzyme catalyses Hydrolytically removes 5'-nucleotides successively from the 3'-hydroxy termini of 3'-hydroxy-terminated oligonucleotides.. Nuclease required for the repair of DNA interstrand cross-links (ICLs). Acts as a 5'-3' exonuclease that anchors at a cut end of DNA and cleaves DNA successively at every third nucleotide, allowing to excise an ICL from one strand through flanking incisions. May act upstream of the helicase RECQL4A and the ATPase RAD5A, which is involved in error-free post-replicative repair. Functions independently of MUS81 pathway, but in a similar pathway with RECQ4A, RAD5A and MFH1 in ICL repair. The chain is Fanconi-associated nuclease 1 homolog from Arabidopsis thaliana (Mouse-ear cress).